We begin with the raw amino-acid sequence, 117 residues long: Large ribosomal subunit protein bL19 (117 aa).

Belongs to the bacterial ribosomal protein bL19 family.

Functionally, this protein is located at the 30S-50S ribosomal subunit interface and may play a role in the structure and function of the aminoacyl-tRNA binding site. This chain is Large ribosomal subunit protein bL19, found in Desulfosudis oleivorans (strain DSM 6200 / JCM 39069 / Hxd3) (Desulfococcus oleovorans).